The following is a 143-amino-acid chain: High mobility group protein B (143 aa).

The segment at M1–Q22 is disordered. The HMG box DNA-binding region spans P18–K86. At A70 the chain carries Blocked amino end (Ala). Basic and acidic residues-rich tracts occupy residues A100–K120 and A131–K143. The interval A100 to K143 is disordered.

The protein resides in the nucleus. The protein localises to the chromosome. This Tetrahymena thermophila protein is High mobility group protein B.